The following is a 192-amino-acid chain: 3-isopropylmalate dehydratase small subunit (192 aa).

This sequence belongs to the LeuD family. LeuD type 1 subfamily. Heterodimer of LeuC and LeuD.

The catalysed reaction is (2R,3S)-3-isopropylmalate = (2S)-2-isopropylmalate. It functions in the pathway amino-acid biosynthesis; L-leucine biosynthesis; L-leucine from 3-methyl-2-oxobutanoate: step 2/4. Functionally, catalyzes the isomerization between 2-isopropylmalate and 3-isopropylmalate, via the formation of 2-isopropylmaleate. In Zymomonas mobilis subsp. mobilis (strain ATCC 31821 / ZM4 / CP4), this protein is 3-isopropylmalate dehydratase small subunit.